Here is a 1210-residue protein sequence, read N- to C-terminus: Microtubule-associated tumor suppressor 1 homolog (1210 aa).

Disordered stretches follow at residues 1–21 (MNDD…IRDK), 370–404 (DPHI…PYEM), 446–482 (VENG…NTTV), 513–545 (QPKD…LTMM), and 585–618 (HSKN…AGSE). A compositionally biased stretch (basic and acidic residues) spans 370–379 (DPHIDSHDND). 3 positions are modified to phosphoserine: serine 375, serine 380, and serine 393. Residues 381 to 398 (DIQSSTEELTLRSVSGQR) show a composition bias toward polar residues. Basic and acidic residues predominate over residues 446–455 (VENGPRDAKR). Over residues 473–482 (KSATKTNTTV) the composition is skewed to polar residues. A compositionally biased stretch (low complexity) spans 524–534 (PSPQVTGGSSP). Over residues 585 to 605 (HSKNASLGVPRTTSATKSNQE) the composition is skewed to polar residues. At serine 621 the chain carries Phosphoserine. The disordered stretch occupies residues 683–771 (SKSLLVGSAP…YEEKPPKQAF (89 aa)). Polar residues predominate over residues 692–702 (PKTSTTPGRSS). Positions 876–1171 (IQHLLSEREE…RLSMENEELL (296 aa)) form a coiled coil. A phosphoserine mark is found at serine 1143, serine 1164, serine 1185, serine 1195, serine 1199, serine 1201, serine 1203, serine 1204, and serine 1208. Residues 1177-1210 (GDLCSPKRSPTSSAIPFQSPRNSGSFSSPSISPR) are disordered. The span at 1195 to 1210 (SPRNSGSFSSPSISPR) shows a compositional bias: low complexity.

It belongs to the MTUS1 family. In terms of assembly, homodimer. Interacts with AGTR2. Interacts with PTPN6. In terms of tissue distribution, ubiquitously expressed, with highest levels in uterus and adrenal gland.

Its subcellular location is the mitochondrion. The protein localises to the golgi apparatus. The protein resides in the cell membrane. It is found in the nucleus. Its function is as follows. Cooperates with AGTR2 to inhibit ERK2 activation and cell proliferation. May be required for AGTR2 cell surface expression. Together with PTPN6, induces UBE2V2 expression upon angiotensin-II stimulation. In Mus musculus (Mouse), this protein is Microtubule-associated tumor suppressor 1 homolog (Mtus1).